A 184-amino-acid polypeptide reads, in one-letter code: Mediator of RNA polymerase II transcription subunit 30 (184 aa).

A coiled-coil region spans residues 136–179 (SQLRFASEEKREILEVNKKLKQKNQQLKQIMDQLRNLIWDINSM).

It belongs to the Mediator complex subunit 30 family. In terms of assembly, component of the Mediator complex.

The protein resides in the nucleus. In terms of biological role, component of the Mediator complex, a coactivator involved in the regulated transcription of nearly all RNA polymerase II-dependent genes. Mediator functions as a bridge to convey information from gene-specific regulatory proteins to the basal RNA polymerase II transcription machinery. Mediator is recruited to promoters by direct interactions with regulatory proteins and serves as a scaffold for the assembly of a functional preinitiation complex with RNA polymerase II and the general transcription factors. The chain is Mediator of RNA polymerase II transcription subunit 30 (med30) from Xenopus laevis (African clawed frog).